A 365-amino-acid chain; its full sequence is UPF0718 protein MJ0584 (365 aa).

A run of 11 helical transmembrane segments spans residues 6–26 (MSFI…YLNV), 32–52 (LLMA…NFII), 67–87 (VAAV…PLFA), 108–128 (AINV…IGFL), 130–150 (AVFA…IFKS), 174–194 (ITFF…PKLF), 201–221 (LYDG…ILAV), 245–265 (IVFP…AIIP), 282–302 (FIAS…VPII), 308–328 (LGMG…LSIP), and 344–364 (TYLG…GIIL).

Belongs to the UPF0718 family.

The protein resides in the cell membrane. The chain is UPF0718 protein MJ0584 from Methanocaldococcus jannaschii (strain ATCC 43067 / DSM 2661 / JAL-1 / JCM 10045 / NBRC 100440) (Methanococcus jannaschii).